Here is a 260-residue protein sequence, read N- to C-terminus: UPF0246 protein APJL_0596 (260 aa).

Belongs to the UPF0246 family.

This is UPF0246 protein APJL_0596 from Actinobacillus pleuropneumoniae serotype 3 (strain JL03).